The following is a 313-amino-acid chain: Olfactory receptor 4M2 (313 aa).

Over 1–25 (METANYTKVTEFVLTGLSQTPEVQL) the chain is Cytoplasmic. A helical transmembrane segment spans residues 26 to 46 (VLFVIFLSFYLFILPGNILII). Topologically, residues 47 to 57 (CTISLDPHLTS) are extracellular. A helical membrane pass occupies residues 58–78 (PMYFLLANLAFLDIWYSSITA). At 79–97 (PEMLIDFFVERKIISFDEC) the chain is on the cytoplasmic side. A disulfide bridge connects residues C97 and C179. Residues 98-118 (IAQLFFLHFAGASEMFLLTVM) form a helical membrane-spanning segment. The Extracellular portion of the chain corresponds to 119-142 (AFDLYTAICRPLHYATIMNQRLCC). Residues 143 to 163 (ILVALSWRGGFIHSIIQVALI) traverse the membrane as a helical segment. At 164-204 (VRLPFCGPNELDSYFCDITQVVRIACANTFPEELVMICSSG) the chain is on the cytoplasmic side. The chain crosses the membrane as a helical span at residues 205 to 225 (LISVVCLIALLMSYAFLLALL). The Extracellular portion of the chain corresponds to 226–238 (KKLSGSGENTNRA). A helical transmembrane segment spans residues 239 to 259 (VSTCYSHITIVVLMFGPSIYI). Residues 260-270 (YARPFDSFSLD) are Cytoplasmic-facing. Residues 271 to 291 (KVVSVFNTLIFPLHNPIIYTL) traverse the membrane as a helical segment. The Extracellular portion of the chain corresponds to 292-313 (RNKEVKAAMRKLVTKYILCKEK).

Belongs to the G-protein coupled receptor 1 family.

It is found in the membrane. In terms of biological role, odorant receptor. In Homo sapiens (Human), this protein is Olfactory receptor 4M2.